We begin with the raw amino-acid sequence, 397 residues long: Elongation factor Tu (397 aa).

Residues Lys-10–Lys-207 form the tr-type G domain. A G1 region spans residues Gly-19–Thr-26. A GTP-binding site is contributed by Gly-19–Thr-26. Thr-26 serves as a coordination point for Mg(2+). The interval Gly-60–Asn-64 is G2. The segment at Asp-81–Gly-84 is G3. GTP contacts are provided by residues Asp-81 to His-85 and Asn-136 to Asp-139. Positions Asn-136–Asp-139 are G4. The G5 stretch occupies residues Ser-177–Leu-179.

Belongs to the TRAFAC class translation factor GTPase superfamily. Classic translation factor GTPase family. EF-Tu/EF-1A subfamily. As to quaternary structure, monomer.

It localises to the cytoplasm. It carries out the reaction GTP + H2O = GDP + phosphate + H(+). GTP hydrolase that promotes the GTP-dependent binding of aminoacyl-tRNA to the A-site of ribosomes during protein biosynthesis. In Metamycoplasma hominis (strain ATCC 23114 / DSM 25592 / NBRC 14850 / NCTC 10111 / PG21) (Mycoplasma hominis), this protein is Elongation factor Tu.